A 479-amino-acid polypeptide reads, in one-letter code: Ubiquinone biosynthesis monooxygenase COQ6, mitochondrial (479 aa).

A mitochondrion-targeting transit peptide spans 1 to 17 (MFFSKVMLTRRILVRGL).

This sequence belongs to the UbiH/COQ6 family. Component of a multi-subunit COQ enzyme complex, composed of at least COQ3, COQ4, COQ5, COQ6, COQ7 and COQ9. FAD serves as cofactor.

It localises to the mitochondrion inner membrane. It catalyses the reaction 4-hydroxy-3-(all-trans-hexaprenyl)benzoate + 2 reduced [2Fe-2S]-[ferredoxin] + O2 + 2 H(+) = 3,4-dihydroxy-5-(all-trans-hexaprenyl)benzoate + 2 oxidized [2Fe-2S]-[ferredoxin] + H2O. The enzyme catalyses 2-methoxy-6-(all-trans-hexaprenyl)phenol + 2 reduced [2Fe-2S]-[ferredoxin] + O2 + 2 H(+) = 2-methoxy-6-(all-trans-hexaprenyl)benzene-1,4-diol + 2 oxidized [2Fe-2S]-[ferredoxin] + H2O. It carries out the reaction 4-amino-3-(all-trans-hexaprenyl)benzoate + 2 reduced [2Fe-2S]-[ferredoxin] + O2 + 2 H(+) = 4-amino-5-hydroxy-3-(all-trans-hexaprenyl)benzoate + 2 oxidized [2Fe-2S]-[ferredoxin] + H2O. The catalysed reaction is 4-amino-5-hydroxy-3-(all-trans-hexaprenyl)benzoate + 4 reduced [2Fe-2S]-[ferredoxin] + O2 + 5 H(+) = 3,4-dihydroxy-5-(all-trans-hexaprenyl)benzoate + 4 oxidized [2Fe-2S]-[ferredoxin] + NH4(+) + H2O. The protein operates within cofactor biosynthesis; ubiquinone biosynthesis. FAD-dependent monooxygenase required for two non-consecutive steps during ubiquinone biosynthesis. Required for the C5-ring hydroxylation during ubiquinone biosynthesis by catalyzing the hydroxylation of 4-hydroxy-3-(all-trans-hexaprenyl)benzoic acid to 3,4-dihydroxy-5-(all-trans-hexaprenyl)benzoic acid. Also acts downstream of COQ4, for the C1-hydroxylation during ubiquinone biosynthesis by catalyzing the hydroxylation of 2-methoxy-6-(all-trans-hexaprenyl)phenol to 2-methoxy-6-(all-trans-hexaprenyl)benzene-1,4-diol. The electrons required for the hydroxylation reaction are funneled indirectly from NADPH via ferredoxin (YAH1) and ferredoxin reductase (ARH1) to COQ6. Can also convert 3-hexaprenyl-4-aminobenzoic acid (HAB), a COQ2-prenylated pABA, to DHHB in a two step process. HAB is first hydroxylated at C5 to yield 3-hexaprenyl-4-amino-5-hydroxybenzoic acid (HHAB) which is further deaminated at C4 by COQ6 to produce DHHB. The chain is Ubiquinone biosynthesis monooxygenase COQ6, mitochondrial from Saccharomyces cerevisiae (strain ATCC 204508 / S288c) (Baker's yeast).